Reading from the N-terminus, the 156-residue chain is Small ribosomal subunit protein uS7 (156 aa).

It belongs to the universal ribosomal protein uS7 family. In terms of assembly, part of the 30S ribosomal subunit. Contacts proteins S9 and S11.

In terms of biological role, one of the primary rRNA binding proteins, it binds directly to 16S rRNA where it nucleates assembly of the head domain of the 30S subunit. Is located at the subunit interface close to the decoding center, probably blocks exit of the E-site tRNA. In Idiomarina loihiensis (strain ATCC BAA-735 / DSM 15497 / L2-TR), this protein is Small ribosomal subunit protein uS7.